We begin with the raw amino-acid sequence, 481 residues long: Ribulose bisphosphate carboxylase large chain (481 aa).

Positions 1–2 are excised as a propeptide; it reads MS. Pro-3 is modified (N-acetylproline). An N6,N6,N6-trimethyllysine modification is found at Lys-14. Substrate is bound by residues Asn-123 and Thr-173. Lys-175 functions as the Proton acceptor in the catalytic mechanism. Substrate is bound at residue Lys-177. The Mg(2+) site is built by Lys-201, Asp-203, and Glu-204. An N6-carboxylysine modification is found at Lys-201. His-294 functions as the Proton acceptor in the catalytic mechanism. The substrate site is built by Arg-295, His-327, and Ser-379.

This sequence belongs to the RuBisCO large chain family. Type I subfamily. In terms of assembly, heterohexadecamer of 8 large chains and 8 small chains; disulfide-linked. The disulfide link is formed within the large subunit homodimers. Mg(2+) is required as a cofactor. Post-translationally, the disulfide bond which can form in the large chain dimeric partners within the hexadecamer appears to be associated with oxidative stress and protein turnover.

It localises to the plastid. It is found in the chloroplast. The enzyme catalyses 2 (2R)-3-phosphoglycerate + 2 H(+) = D-ribulose 1,5-bisphosphate + CO2 + H2O. It catalyses the reaction D-ribulose 1,5-bisphosphate + O2 = 2-phosphoglycolate + (2R)-3-phosphoglycerate + 2 H(+). Functionally, ruBisCO catalyzes two reactions: the carboxylation of D-ribulose 1,5-bisphosphate, the primary event in carbon dioxide fixation, as well as the oxidative fragmentation of the pentose substrate in the photorespiration process. Both reactions occur simultaneously and in competition at the same active site. The polypeptide is Ribulose bisphosphate carboxylase large chain (Coffea arabica (Arabian coffee)).